A 376-amino-acid chain; its full sequence is 2-hydroxypropyl-CoM lyase (376 aa).

Zn(2+)-binding residues include histidine 218, cysteine 220, and cysteine 341.

This sequence belongs to the vitamin-B12 independent methionine synthase family. As to quaternary structure, homohexamer. Component I of the aliphatic epoxide carboxylation complex together with components II, III and IV. The cofactor is Zn(2+).

The enzyme catalyses (R)-2-hydroxypropyl-coenzyme M = (R)-1,2-epoxypropane + coenzyme M. It catalyses the reaction (S)-2-hydroxypropyl-coenzyme M = (S)-1,2-epoxypropane + coenzyme M. It participates in alkene metabolism; propylene degradation. Its activity is regulated as follows. Inhibited by methylepoxypropane. Inhibited by the zinc chelator 4-(2-pyridylazo)resorcinol (PAR), in the presence of p- (hydroxymercuri)benzenesulfonic acid (PMPS), and by EDTA. Not inhibited by the coenzyme M analog 2-bromoethanesulfonate (BES). Involved in aliphatic epoxide carboxylation. Catalyzes the addition of coenzyme M (CoM) to either R- or S-epoxypropane to form the thioether conjugate 2-hydroxypropyl-CoM. Catalyzes the reaction of CoM with R-epoxypropane at a rate approximately twice of that with S-epoxypropane. The CoM analogs 2-mercaptopropionate, 2-mercaptoethanol and cysteine substitute poorly for CoM as the thiol substrate. This is 2-hydroxypropyl-CoM lyase from Xanthobacter autotrophicus (strain ATCC BAA-1158 / Py2).